Consider the following 200-residue polypeptide: Dephospho-CoA kinase (200 aa).

Positions 4 to 200 constitute a DPCK domain; that stretch reads VIGLTGGIAS…AILKKWNIID (197 aa). 12–17 is an ATP binding site; it reads ASGKST.

This sequence belongs to the CoaE family.

Its subcellular location is the cytoplasm. It carries out the reaction 3'-dephospho-CoA + ATP = ADP + CoA + H(+). Its pathway is cofactor biosynthesis; coenzyme A biosynthesis; CoA from (R)-pantothenate: step 5/5. Catalyzes the phosphorylation of the 3'-hydroxyl group of dephosphocoenzyme A to form coenzyme A. This Bacillus anthracis protein is Dephospho-CoA kinase.